Consider the following 298-residue polypeptide: ATP phosphoribosyltransferase (298 aa).

The protein belongs to the ATP phosphoribosyltransferase family. Long subfamily. Mg(2+) is required as a cofactor.

Its subcellular location is the cytoplasm. It carries out the reaction 1-(5-phospho-beta-D-ribosyl)-ATP + diphosphate = 5-phospho-alpha-D-ribose 1-diphosphate + ATP. It functions in the pathway amino-acid biosynthesis; L-histidine biosynthesis; L-histidine from 5-phospho-alpha-D-ribose 1-diphosphate: step 1/9. Its activity is regulated as follows. Feedback inhibited by histidine. In terms of biological role, catalyzes the condensation of ATP and 5-phosphoribose 1-diphosphate to form N'-(5'-phosphoribosyl)-ATP (PR-ATP). Has a crucial role in the pathway because the rate of histidine biosynthesis seems to be controlled primarily by regulation of HisG enzymatic activity. In Aliivibrio fischeri (strain MJ11) (Vibrio fischeri), this protein is ATP phosphoribosyltransferase.